The chain runs to 816 residues: uncharacterized protein (816 aa).

503–534 (DTWTVITGGTDGIGKAYIEELCKTRGLKKFYL) provides a ligand contact to NADP(+). Serine 641 is a binding site for substrate. Tyrosine 661 acts as the Proton acceptor in catalysis. Helical transmembrane passes span 743 to 763 (FGFS…SIVL) and 777 to 797 (VFII…FLLN).

The protein belongs to the short-chain dehydrogenases/reductases (SDR) family.

The protein resides in the membrane. This is an uncharacterized protein from Caenorhabditis elegans.